The primary structure comprises 429 residues: Adenylosuccinate synthetase (429 aa).

GTP is bound by residues 12–18 (GDEGKGK) and 40–42 (GHT). D13 (proton acceptor) is an active-site residue. Positions 13 and 40 each coordinate Mg(2+). IMP-binding positions include 13 to 16 (DEGK), 38 to 41 (NAGH), T128, R142, Q224, T239, and R303. H41 functions as the Proton donor in the catalytic mechanism. 299–305 (VTTGRPR) contacts substrate. Residues R305, 331 to 333 (LLD), and 413 to 415 (SVG) each bind GTP.

Belongs to the adenylosuccinate synthetase family. Homodimer. Mg(2+) is required as a cofactor.

The protein localises to the cytoplasm. It catalyses the reaction IMP + L-aspartate + GTP = N(6)-(1,2-dicarboxyethyl)-AMP + GDP + phosphate + 2 H(+). Its pathway is purine metabolism; AMP biosynthesis via de novo pathway; AMP from IMP: step 1/2. Its function is as follows. Plays an important role in the de novo pathway of purine nucleotide biosynthesis. Catalyzes the first committed step in the biosynthesis of AMP from IMP. This Clostridioides difficile (strain 630) (Peptoclostridium difficile) protein is Adenylosuccinate synthetase.